A 505-amino-acid chain; its full sequence is MSDQQLDQPSLSHEERQHEENKLIAQRKEKLAAVREQGIAFPNDFRRDSLCGELQKQYEGKSKEELEAAAIPVKIAGRIMLNRGAFMVLQDTSGRLQVYVDRKGLPAETLEAIKTWDLGDIIAAEGTLARSGKGDLYVNMTSVRLLTKSLRPLPDKHHGLTDTEQRYRQRYVDLIVNEETRHTFRVRSQVIAHIRRFLNERGFLEVETPMLQTIPGGAAAKPFETHHNALDMQMFLRIAPELYLKRLVVGGFEKVFEINRNFRNEGVSTRHNPEFTMLEFYQAYADYRDNMDLTEELFRELALAVLGTTDVPYGDKVFHFGEPFVRLSVYDSILKYNPDITEADLNDVDKARAIAKKAGAKVLGHEGLGKLQVMIFEELVESKLEQPHFITEYPFEVSPLARRNDQNPAVTDRFELFIGGREIANAYSELNDAEDQAERFHAQVAEKDAGDDEAMHFDADFVRALEYGMPPTAGEGIGIDRLVMLLTNSPSIRDVILFPHMRPQA.

The span at 1 to 11 shows a compositional bias: polar residues; it reads MSDQQLDQPSL. The disordered stretch occupies residues 1-23; sequence MSDQQLDQPSLSHEERQHEENKL. Positions 12 to 23 are enriched in basic and acidic residues; the sequence is SHEERQHEENKL. Mg(2+) is bound by residues Glu-415 and Glu-422.

Belongs to the class-II aminoacyl-tRNA synthetase family. Homodimer. Requires Mg(2+) as cofactor.

Its subcellular location is the cytoplasm. It carries out the reaction tRNA(Lys) + L-lysine + ATP = L-lysyl-tRNA(Lys) + AMP + diphosphate. This is Lysine--tRNA ligase from Ectopseudomonas mendocina (strain ymp) (Pseudomonas mendocina).